The following is a 313-amino-acid chain: METTTTTLGGGGGGRAGGFSDPPSPLSPPLSPASAAAAALANARWTPTKEQIAVLEGLYRQGLRTPTAEQIQQITARLREHGHIEGKNVFYWFQNHKARQRQKQKQQSFDYFSKLFRRPPPLPVLHRPLARPFPLAMAPTAMPPPPPPPATTTTAACNAGGVMFRTPSFMPVATNNASYYPQQQTPLLYPGMEVCPHDKSTAQPPATTTMYLQAPPSSAHLAAAAGRGAAEAEGHGRRGGGAGGRETLQLFPLQPTFVLPDHKPLRAGSACAAVSPTTPSASASFSWESESSDSPSSEAPPFYDFFGVHSGGR.

A disordered region spans residues M1–P32. The segment covering L8 to G17 has biased composition (gly residues). Residues P22 to S31 show a composition bias toward pro residues. Positions L40–Q104 form a DNA-binding region, homeobox; WUS-type. 2 disordered regions span residues A224–T247 and C271–R313. Residues C271–P301 show a composition bias toward low complexity.

The protein belongs to the WUS homeobox family.

It is found in the nucleus. Functionally, transcription factor which may be involved in developmental processes. The sequence is that of WUSCHEL-related homeobox 5 (WOX5) from Oryza sativa subsp. japonica (Rice).